Here is a 192-residue protein sequence, read N- to C-terminus: Phosphoheptose isomerase (192 aa).

Residues 35 to 192 (LIETLENQGK…CIERHFAHKN (158 aa)) enclose the SIS domain. 50–52 (NGG) is a binding site for substrate. Histidine 59 and glutamate 63 together coordinate Zn(2+). Substrate is bound by residues glutamate 63, 92–93 (ND), 118–120 (STS), serine 123, and glutamine 170. Positions 170 and 178 each coordinate Zn(2+).

It belongs to the SIS family. GmhA subfamily. As to quaternary structure, homotetramer. The cofactor is Zn(2+).

It localises to the cytoplasm. It catalyses the reaction 2 D-sedoheptulose 7-phosphate = D-glycero-alpha-D-manno-heptose 7-phosphate + D-glycero-beta-D-manno-heptose 7-phosphate. It participates in carbohydrate biosynthesis; D-glycero-D-manno-heptose 7-phosphate biosynthesis; D-glycero-alpha-D-manno-heptose 7-phosphate and D-glycero-beta-D-manno-heptose 7-phosphate from sedoheptulose 7-phosphate: step 1/1. Its function is as follows. Catalyzes the isomerization of sedoheptulose 7-phosphate in D-glycero-D-manno-heptose 7-phosphate. This Helicobacter pylori (strain P12) protein is Phosphoheptose isomerase.